A 100-amino-acid polypeptide reads, in one-letter code: Large ribosomal subunit protein uL23 (100 aa).

This sequence belongs to the universal ribosomal protein uL23 family. In terms of assembly, part of the 50S ribosomal subunit. Contacts protein L29, and trigger factor when it is bound to the ribosome.

In terms of biological role, one of the early assembly proteins it binds 23S rRNA. One of the proteins that surrounds the polypeptide exit tunnel on the outside of the ribosome. Forms the main docking site for trigger factor binding to the ribosome. This Corynebacterium aurimucosum (strain ATCC 700975 / DSM 44827 / CIP 107346 / CN-1) (Corynebacterium nigricans) protein is Large ribosomal subunit protein uL23.